A 406-amino-acid polypeptide reads, in one-letter code: Argininosuccinate synthase (406 aa).

Residues 11 to 19 and A38 each bind ATP; that span reads AYSGGLDTS. 2 residues coordinate L-citrulline: Y91 and S96. G121 lines the ATP pocket. L-aspartate-binding residues include T123, N127, and D128. N127 contributes to the L-citrulline binding site. L-citrulline contacts are provided by R131, S181, S190, E266, and Y278.

This sequence belongs to the argininosuccinate synthase family. Type 1 subfamily. Homotetramer.

The protein resides in the cytoplasm. The enzyme catalyses L-citrulline + L-aspartate + ATP = 2-(N(omega)-L-arginino)succinate + AMP + diphosphate + H(+). Its pathway is amino-acid biosynthesis; L-arginine biosynthesis; L-arginine from L-ornithine and carbamoyl phosphate: step 2/3. The polypeptide is Argininosuccinate synthase (Campylobacter jejuni (strain RM1221)).